The sequence spans 436 residues: Gamma-glutamyl phosphate reductase (436 aa).

This sequence belongs to the gamma-glutamyl phosphate reductase family.

The protein localises to the cytoplasm. It catalyses the reaction L-glutamate 5-semialdehyde + phosphate + NADP(+) = L-glutamyl 5-phosphate + NADPH + H(+). It participates in amino-acid biosynthesis; L-proline biosynthesis; L-glutamate 5-semialdehyde from L-glutamate: step 2/2. In terms of biological role, catalyzes the NADPH-dependent reduction of L-glutamate 5-phosphate into L-glutamate 5-semialdehyde and phosphate. The product spontaneously undergoes cyclization to form 1-pyrroline-5-carboxylate. This Prochlorococcus marinus (strain MIT 9515) protein is Gamma-glutamyl phosphate reductase.